The primary structure comprises 144 residues: Small ribosomal subunit protein eS19A (144 aa).

The disordered stretch occupies residues 83–102 (VNRGMRPSHHRDGSGSVQRK).

This sequence belongs to the eukaryotic ribosomal protein eS19 family. As to quaternary structure, component of the small ribosomal subunit (SSU). Mature yeast ribosomes consist of a small (40S) and a large (60S) subunit. The 40S small subunit contains 1 molecule of ribosomal RNA (18S rRNA) and at least 33 different proteins. The large 60S subunit contains 3 rRNA molecules (25S, 5.8S and 5S rRNA) and at least 46 different proteins.

Its subcellular location is the cytoplasm. The protein resides in the nucleus. The protein localises to the nucleolus. Functionally, component of the ribosome, a large ribonucleoprotein complex responsible for the synthesis of proteins in the cell. The small ribosomal subunit (SSU) binds messenger RNAs (mRNAs) and translates the encoded message by selecting cognate aminoacyl-transfer RNA (tRNA) molecules. The large subunit (LSU) contains the ribosomal catalytic site termed the peptidyl transferase center (PTC), which catalyzes the formation of peptide bonds, thereby polymerizing the amino acids delivered by tRNAs into a polypeptide chain. The nascent polypeptides leave the ribosome through a tunnel in the LSU and interact with protein factors that function in enzymatic processing, targeting, and the membrane insertion of nascent chains at the exit of the ribosomal tunnel. eS19 is required for proper maturation of the small (40S) ribosomal subunit. Binds to 40S pre-ribosomal particles, probably required after association of NOC4 but before association of ENP1, TSR1 and RIO2 with 20/21S pre-rRNA. This is Small ribosomal subunit protein eS19A (rps1901) from Schizosaccharomyces pombe (strain 972 / ATCC 24843) (Fission yeast).